Consider the following 117-residue polypeptide: EVQLQQSGPELVKPGASVKMSCKASGYTFTDYYMKWVKQSHGKSLEWIGDINPNNGGTSYNQKFKGKATLTVDKSSSTAYMQLNSLTSEDSAVYYCARDRYWYFDVWGAGTTVTVSS.

The Ig-like domain occupies 1–116 (EVQLQQSGPE…WGAGTTVTVS (116 aa)). A disulfide bridge links cysteine 22 with cysteine 96.

The chain is Ig heavy chain V region J558 from Mus musculus (Mouse).